Here is an 81-residue protein sequence, read N- to C-terminus: Large ribosomal subunit protein bL31B (81 aa).

This sequence belongs to the bacterial ribosomal protein bL31 family. Type B subfamily. In terms of assembly, part of the 50S ribosomal subunit.

This Borreliella burgdorferi (strain ZS7) (Borrelia burgdorferi) protein is Large ribosomal subunit protein bL31B.